We begin with the raw amino-acid sequence, 160 residues long: Dysbindin domain-containing protein 1 (160 aa).

2 disordered regions span residues 1–34 (MESP…GDTC) and 95–160 (ADSD…PKED). A phosphoserine mark is found at Ser3, Ser97, and Ser121. Basic and acidic residues predominate over residues 127-143 (TRAEQNREKQTPSDPER).

The protein belongs to the dysbindin family.

The sequence is that of Dysbindin domain-containing protein 1 (Dbndd1) from Rattus norvegicus (Rat).